We begin with the raw amino-acid sequence, 124 residues long: Small ribosomal subunit protein uS12 (124 aa).

Asp-89 is modified (3-methylthioaspartic acid).

Belongs to the universal ribosomal protein uS12 family. In terms of assembly, part of the 30S ribosomal subunit. Contacts proteins S8 and S17. May interact with IF1 in the 30S initiation complex.

Its function is as follows. With S4 and S5 plays an important role in translational accuracy. Interacts with and stabilizes bases of the 16S rRNA that are involved in tRNA selection in the A site and with the mRNA backbone. Located at the interface of the 30S and 50S subunits, it traverses the body of the 30S subunit contacting proteins on the other side and probably holding the rRNA structure together. The combined cluster of proteins S8, S12 and S17 appears to hold together the shoulder and platform of the 30S subunit. The sequence is that of Small ribosomal subunit protein uS12 from Psychrobacter sp. (strain PRwf-1).